The primary structure comprises 93 residues: MANKKKDHREEAVELLKQDAKRILQLIKVQMDNLTLPQCPAYEEVLDTQMYGLSREINFATRLGLIEPEEGKNLISALEKELSTLHELSMSKK.

The protein belongs to the UPF0358 family.

This chain is UPF0358 protein lwe1048, found in Listeria welshimeri serovar 6b (strain ATCC 35897 / DSM 20650 / CCUG 15529 / CIP 8149 / NCTC 11857 / SLCC 5334 / V8).